The chain runs to 164 residues: MKILISDNISLELFCKNPIKILEKSNKGIIGVLKNKSPIFYVITPYILKKIFDLECNLLDLDKTKQQISKKFSMHPQWTPDKDFIRQAALWGITLTEEILESELASFISYWQAEGCFFHHIQWQQKLARSLQKSRSISYMSQKKRDITYIPTPDQTVPNGFRGK.

It belongs to the DnaT family. Homooligomerizes. Interacts with PriB. Component of the replication restart primosome. Primosome assembly occurs via a 'hand-off' mechanism. PriA binds to replication forks, subsequently PriB then DnaT bind; DnaT then displaces ssDNA to generate the helicase loading substrate.

Functionally, involved in the restart of stalled replication forks, which reloads the replicative helicase on sites other than the origin of replication. Can function in multiple replication restart pathways. Displaces ssDNA from a PriB-ssDNA complex. Probably forms a spiral filament on ssDNA. In Buchnera aphidicola subsp. Acyrthosiphon pisum (strain 5A), this protein is Replication restart protein DnaT.